Here is a 185-residue protein sequence, read N- to C-terminus: MMTLSDLPSDLAEEVLSKIPVTSLRGVRATCKKWNTLSKDRSFTRKHLAQAKAAAAREFMVVMVMDFQVYLMGINLHKDVDATINGQGKLISLDDSNQVDISYVYHCDSLVLCIPKDCARLVVWNPYWGQTLWFKPTSLRHFPHWYMYAIGYQMRRGNRDAKTSRWLLTCRPTTKTITKNTIDHL.

An F-box domain is found at 1–47; sequence MMTLSDLPSDLAEEVLSKIPVTSLRGVRATCKKWNTLSKDRSFTRKH.

This is Putative F-box protein At3g17400 from Arabidopsis thaliana (Mouse-ear cress).